The chain runs to 383 residues: UDP-N-acetylglucosamine--N-acetylmuramyl-(pentapeptide) pyrophosphoryl-undecaprenol N-acetylglucosamine transferase (383 aa).

UDP-N-acetyl-alpha-D-glucosamine contacts are provided by residues 10–12 (TGG), Asn124, Arg165, Ser190, Ile245, and Gln290. The interval 363 to 383 (SPFGQAREPGQKPARPPDPAS) is disordered.

Belongs to the glycosyltransferase 28 family. MurG subfamily.

Its subcellular location is the cell inner membrane. It catalyses the reaction di-trans,octa-cis-undecaprenyl diphospho-N-acetyl-alpha-D-muramoyl-L-alanyl-D-glutamyl-meso-2,6-diaminopimeloyl-D-alanyl-D-alanine + UDP-N-acetyl-alpha-D-glucosamine = di-trans,octa-cis-undecaprenyl diphospho-[N-acetyl-alpha-D-glucosaminyl-(1-&gt;4)]-N-acetyl-alpha-D-muramoyl-L-alanyl-D-glutamyl-meso-2,6-diaminopimeloyl-D-alanyl-D-alanine + UDP + H(+). It participates in cell wall biogenesis; peptidoglycan biosynthesis. In terms of biological role, cell wall formation. Catalyzes the transfer of a GlcNAc subunit on undecaprenyl-pyrophosphoryl-MurNAc-pentapeptide (lipid intermediate I) to form undecaprenyl-pyrophosphoryl-MurNAc-(pentapeptide)GlcNAc (lipid intermediate II). The sequence is that of UDP-N-acetylglucosamine--N-acetylmuramyl-(pentapeptide) pyrophosphoryl-undecaprenol N-acetylglucosamine transferase from Anaeromyxobacter dehalogenans (strain 2CP-1 / ATCC BAA-258).